Consider the following 259-residue polypeptide: Factor V activator (259 aa).

The signal sequence occupies residues Met-1–Ala-18. A propeptide spanning residues Gln-19–Leu-24 is cleaved from the precursor. Positions Val-25–Ala-251 constitute a Peptidase S1 domain. Disulfide bonds link Cys-31–Cys-165, Cys-52–Cys-68, Cys-100–Cys-258, Cys-144–Cys-212, Cys-176–Cys-191, and Cys-202–Cys-227. Catalysis depends on charge relay system residues His-67 and Asp-112. Residue Ser-206 is the Charge relay system of the active site. Residue Asn-253 is glycosylated (N-linked (GlcNAc...) asparagine).

The protein belongs to the peptidase S1 family. Snake venom subfamily. In terms of assembly, monomer. N-glycosylated. Contains 4.4% of hexoses, 4.4% of hexosamines and 3.1% of sialic acids. As to expression, expressed by the venom gland.

It localises to the secreted. The enzyme catalyses Fully activates human clotting factor V by a single cleavage at the 1545-Trp-Tyr-Leu-Arg-|-Ser-Asn-Asn-Gly-1552 bond. Cattle, but not rabbit, factor V is cleaved, and no other proteins of the clotting system are attacked. Esterase activity is observed on Bz-Arg-OEt and Tos-Arg-OMe, and amidase activity on Phe-pipecolyl-Arg-NHPhNO2.. With respect to regulation, inhibited by D-Phe-Pro-Arg-chloromethyl ketone (FPRCK) (98%), PMSF (93%), benzamidine (67%), and diisopropylfluorophosphate (DFP). Is not inhibited by BPTI, antithrombin and EDTA. In terms of biological role, venom serine protease that converts factor V (F5) to the active form Va in the presence of calcium ions and phospholipids. It cleaves the Arg(1545)-Ser(1546) linkage in the human factor V molecule. Has hydrolytic activities against BAEE (1.2 U/mg), TAME, and Pro-Phe-Arg-MCA (4.9 U/mg). Shows coagulant activity. The polypeptide is Factor V activator (Macrovipera lebetinus (Levantine viper)).